The primary structure comprises 564 residues: MLDYDEVTAFLGEWGTFQRLIFFLLSASIIPNGFTGLSAVFLTAIPEHRCRIPDTVNLSSAWRNHSIPMETKDGPEVPQKCRRYRLATIANFSELGLEPGRDVDLEQLEQENCLDGWEYDKDIFLSTIVTEWDLVCKDDWKAPLTTSFFYVGVLLGSFISGQLSDRFGRKNILFLTMAMHTGFSFIQVFSVNFEMFTLLYTLVGMGHISNYVAAFVLGTEMLSKSVRIIFATLGVCIFFAFGFMVLPLFAYFIREWRRLLLAITLPGVLCGALWWFIPESPRWLISQGRIKEAEVIIRKAAKINGIVAPSTIFDPSETNKLQDDSSKKPQSHHIYDLVRTPNIRILTIMSIILWLTISVGYFGLSLDTPNLNGNIYVNCFLLAAVEVPAYVLAWLLLQHVSRRYSMAGSLFLGGSVLLLVQLVPSDLHYLSTTLVMVGKFGITSAYSMVYVYTAELYPTVVRNMGVGVSSTASRLGSILSPYFVYLGAYDRRLPYILMGSLTILTAIITLFFPESSGVSLPETIDEMQKVKKLKQRQSLSKKGSPKESKGNVSRTSRTSEPKGF.

The Cytoplasmic segment spans residues 1-20 (MLDYDEVTAFLGEWGTFQRL). The helical transmembrane segment at 21–41 (IFFLLSASIIPNGFTGLSAVF) threads the bilayer. Topologically, residues 42–142 (LTAIPEHRCR…DLVCKDDWKA (101 aa)) are extracellular. N57, N64, and N91 each carry an N-linked (GlcNAc...) asparagine glycan. Residues 143-163 (PLTTSFFYVGVLLGSFISGQL) form a helical membrane-spanning segment. At 164–172 (SDRFGRKNI) the chain is on the cytoplasmic side. Residues 173-193 (LFLTMAMHTGFSFIQVFSVNF) form a helical membrane-spanning segment. Residues 194-197 (EMFT) lie on the Extracellular side of the membrane. A helical transmembrane segment spans residues 198 to 218 (LLYTLVGMGHISNYVAAFVLG). ATP is bound at residue 218–225 (GTEMLSKS). Residues 219–232 (TEMLSKSVRIIFAT) are Cytoplasmic-facing. A helical transmembrane segment spans residues 233–253 (LGVCIFFAFGFMVLPLFAYFI). Over 254–257 (REWR) the chain is Extracellular. The helical transmembrane segment at 258–278 (RLLLAITLPGVLCGALWWFIP) threads the bilayer. At 279 to 344 (ESPRWLISQG…YDLVRTPNIR (66 aa)) the chain is on the cytoplasmic side. Residues 345–365 (ILTIMSIILWLTISVGYFGLS) traverse the membrane as a helical segment. Residues 366–376 (LDTPNLNGNIY) lie on the Extracellular side of the membrane. Residues 377–397 (VNCFLLAAVEVPAYVLAWLLL) traverse the membrane as a helical segment. Residues 398 to 409 (QHVSRRYSMAGS) are Cytoplasmic-facing. Residues 410-430 (LFLGGSVLLLVQLVPSDLHYL) form a helical membrane-spanning segment. At 431–433 (STT) the chain is on the extracellular side. A helical membrane pass occupies residues 434–454 (LVMVGKFGITSAYSMVYVYTA). Over 455–465 (ELYPTVVRNMG) the chain is Cytoplasmic. The chain crosses the membrane as a helical span at residues 466–486 (VGVSSTASRLGSILSPYFVYL). The Extracellular portion of the chain corresponds to 487–491 (GAYDR). A helical transmembrane segment spans residues 492–512 (RLPYILMGSLTILTAIITLFF). Residues 513-564 (PESSGVSLPETIDEMQKVKKLKQRQSLSKKGSPKESKGNVSRTSRTSEPKGF) are Cytoplasmic-facing. The interval 532 to 564 (KLKQRQSLSKKGSPKESKGNVSRTSRTSEPKGF) is disordered.

This sequence belongs to the major facilitator (TC 2.A.1) superfamily. Organic cation transporter (TC 2.A.1.19) family. As to expression, predominantly expressed in testis.

Its subcellular location is the peroxisome membrane. Functionally, sodium-ion independent, medium affinity carnitine transporter. Also transports organic cations such as tetraethylammonium (TEA) without the involvement of sodium. Relative uptake activity ratio of carnitine to TEA is 746. This chain is Solute carrier family 22 member 21 (Slc22a21), found in Mus musculus (Mouse).